We begin with the raw amino-acid sequence, 120 residues long: Phosphoribosyl-AMP cyclohydrolase (120 aa).

A Mg(2+)-binding site is contributed by aspartate 75. A Zn(2+)-binding site is contributed by cysteine 76. The Mg(2+) site is built by aspartate 77 and aspartate 79. Residues cysteine 92 and cysteine 99 each coordinate Zn(2+).

Belongs to the PRA-CH family. In terms of assembly, homodimer. Requires Mg(2+) as cofactor. Zn(2+) serves as cofactor.

It is found in the cytoplasm. It carries out the reaction 1-(5-phospho-beta-D-ribosyl)-5'-AMP + H2O = 1-(5-phospho-beta-D-ribosyl)-5-[(5-phospho-beta-D-ribosylamino)methylideneamino]imidazole-4-carboxamide. The protein operates within amino-acid biosynthesis; L-histidine biosynthesis; L-histidine from 5-phospho-alpha-D-ribose 1-diphosphate: step 3/9. In terms of biological role, catalyzes the hydrolysis of the adenine ring of phosphoribosyl-AMP. The polypeptide is Phosphoribosyl-AMP cyclohydrolase (Methanosarcina mazei (strain ATCC BAA-159 / DSM 3647 / Goe1 / Go1 / JCM 11833 / OCM 88) (Methanosarcina frisia)).